We begin with the raw amino-acid sequence, 473 residues long: Ras-GEF domain-containing family member 1B (473 aa).

Positions 34-164 (HDNNLLSGSL…QMMQCLIRKL (131 aa)) constitute an N-terminal Ras-GEF domain. Positions 204 to 452 (NDPYTLAQQL…LYLASYESEG (249 aa)) constitute a Ras-GEF domain.

As to quaternary structure, interacts with Ras family proteins. Interacts with CCDC124 during cytokinesis.

Its subcellular location is the early endosome. The protein resides in the late endosome. The protein localises to the midbody. Functionally, guanine nucleotide exchange factor (GEF) with specificity for RAP2A, it doesn't seems to activate other Ras family proteins (in vitro). This chain is Ras-GEF domain-containing family member 1B (RASGEF1B), found in Homo sapiens (Human).